Here is a 94-residue protein sequence, read N- to C-terminus: Acylphosphatase (94 aa).

Residues 8–94 (ALHVIVKGRV…RGYTDFRIEV (87 aa)) enclose the Acylphosphatase-like domain. Catalysis depends on residues R23 and N41.

The protein belongs to the acylphosphatase family.

The enzyme catalyses an acyl phosphate + H2O = a carboxylate + phosphate + H(+). This chain is Acylphosphatase (acyP), found in Treponema denticola (strain ATCC 35405 / DSM 14222 / CIP 103919 / JCM 8153 / KCTC 15104).